A 141-amino-acid chain; its full sequence is Large ribosomal subunit protein uL11 (141 aa).

Belongs to the universal ribosomal protein uL11 family. As to quaternary structure, part of the ribosomal stalk of the 50S ribosomal subunit. Interacts with L10 and the large rRNA to form the base of the stalk. L10 forms an elongated spine to which L12 dimers bind in a sequential fashion forming a multimeric L10(L12)X complex. In terms of processing, one or more lysine residues are methylated.

In terms of biological role, forms part of the ribosomal stalk which helps the ribosome interact with GTP-bound translation factors. The protein is Large ribosomal subunit protein uL11 of Lacticaseibacillus casei (strain BL23) (Lactobacillus casei).